The following is a 445-amino-acid chain: Rab GDP dissociation inhibitor beta (445 aa).

Methionine 1 is modified (N-acetylmethionine). Position 57 is an N6-succinyllysine (lysine 57). Lysine 112 carries the N6-acetyllysine modification. A Phosphoserine modification is found at serine 130. The residue at position 269 (lysine 269) is an N6-acetyllysine. Serine 382 bears the Phosphoserine mark.

Belongs to the Rab GDI family. As to quaternary structure, interacts with RHOH. Interacts with the GDP-bound inactive forms of RAB3A, RAB3B, RAB3C, RAB5A, RAB5B, RAB5C, RAB8A, RAB8B, RAB10, RAB12, RAB35, and RAB43; binds RAB3D to a lesser extent. Interacts with DZIP1; this interaction negatively regulates the interaction of GDI2 with GDP-bound RAB8A.

The protein localises to the cytoplasm. It localises to the membrane. The protein resides in the golgi apparatus. It is found in the trans-Golgi network. Functionally, GDP-dissociation inhibitor preventing the GDP to GTP exchange of most Rab proteins. By keeping these small GTPases in their inactive GDP-bound form regulates intracellular membrane trafficking. Negatively regulates protein transport to the cilium and ciliogenesis through the inhibition of RAB8A. In Canis lupus familiaris (Dog), this protein is Rab GDP dissociation inhibitor beta (GDI2).